We begin with the raw amino-acid sequence, 70 residues long: Large ribosomal subunit protein bL31 (70 aa).

Zn(2+)-binding residues include Cys16, Cys18, Cys37, and Cys40. Residues 48–70 (QRQASSGGRVDKFNKRFGALGSK) are disordered.

It belongs to the bacterial ribosomal protein bL31 family. Type A subfamily. In terms of assembly, part of the 50S ribosomal subunit. The cofactor is Zn(2+).

Functionally, binds the 23S rRNA. This is Large ribosomal subunit protein bL31 from Photobacterium profundum (strain SS9).